A 253-amino-acid polypeptide reads, in one-letter code: MNTVANADFNGIVMFERSHRENDLLVKFLTKEHGKRMFFIRNAKKVDFKLRSAILPFSHGQYTGLIRSNGLSYINAALDVQQFENIFQDITLNAYATFVLNLVDAAFDDNVKITSWFERINRALILIDAGNDAEIITDLIQIQLLNSFGISITWDHCVICGRTDLPLDYSEAFGGMLCQSHWERDEHRWHLKPKSARIIGILSAVSIFKLGQISISKETKQEIWNLTADIYKNQVGINLKSRSFIDQMKKWEI.

It belongs to the RecO family.

Functionally, involved in DNA repair and RecF pathway recombination. The polypeptide is DNA repair protein RecO (Pediococcus pentosaceus (strain ATCC 25745 / CCUG 21536 / LMG 10740 / 183-1w)).